The following is a 100-amino-acid chain: Urease subunit gamma (100 aa).

Belongs to the urease gamma subunit family. Heterotrimer of UreA (gamma), UreB (beta) and UreC (alpha) subunits. Three heterotrimers associate to form the active enzyme.

Its subcellular location is the cytoplasm. It carries out the reaction urea + 2 H2O + H(+) = hydrogencarbonate + 2 NH4(+). It functions in the pathway nitrogen metabolism; urea degradation; CO(2) and NH(3) from urea (urease route): step 1/1. This Nitrosococcus oceani (strain ATCC 19707 / BCRC 17464 / JCM 30415 / NCIMB 11848 / C-107) protein is Urease subunit gamma.